The primary structure comprises 388 residues: Chorismate synthase (388 aa).

The NADP(+) site is built by arginine 39 and arginine 45. FMN is bound by residues 130–132, 251–252, glycine 296, 311–315, and arginine 337; these read RSS, NA, and KPIPT.

It belongs to the chorismate synthase family. In terms of assembly, homotetramer. Requires FMNH2 as cofactor.

The enzyme catalyses 5-O-(1-carboxyvinyl)-3-phosphoshikimate = chorismate + phosphate. It participates in metabolic intermediate biosynthesis; chorismate biosynthesis; chorismate from D-erythrose 4-phosphate and phosphoenolpyruvate: step 7/7. Its function is as follows. Catalyzes the anti-1,4-elimination of the C-3 phosphate and the C-6 proR hydrogen from 5-enolpyruvylshikimate-3-phosphate (EPSP) to yield chorismate, which is the branch point compound that serves as the starting substrate for the three terminal pathways of aromatic amino acid biosynthesis. This reaction introduces a second double bond into the aromatic ring system. The protein is Chorismate synthase of Streptococcus pneumoniae (strain 70585).